The chain runs to 303 residues: MTGHAPLVGVIGGSGLYKLEGIEPVESLNIDTPWGRPSSPITLFKLPSGPVVAFLARHGVSHQFTPSEVPSRANIAALKKIGCQVIIAFSAVGSLREEIKPRDIVVPSQIIDRTKSVRPCTFFEGLGVVGHAMFGEPFDTELTGLVTKSIKEAVTGFEMNDRIGVHAEKVAICMEGPAFSTRAESNMYRMFGGDIINMSVLPEAKLAREAELSYALIAQITDYDAWRESEEPVTVAEVMATIAANVSVSNRLTLTILDEVHNAVAKGQLKTCKGTMEYSVMTKKEMISEESKKTLSFILPYFS.

Residues Ser-14, 57-58, and 90-91 contribute to the phosphate site; these read RH and SA. Met-198 is a substrate binding site. Residue Ser-199 participates in phosphate binding. 222 to 224 is a binding site for substrate; the sequence is DYD.

It belongs to the PNP/MTAP phosphorylase family. MTAP subfamily. As to quaternary structure, homotrimer.

It localises to the cytoplasm. Its subcellular location is the nucleus. The enzyme catalyses S-methyl-5'-thioadenosine + phosphate = 5-(methylsulfanyl)-alpha-D-ribose 1-phosphate + adenine. The protein operates within amino-acid biosynthesis; L-methionine biosynthesis via salvage pathway; S-methyl-5-thio-alpha-D-ribose 1-phosphate from S-methyl-5'-thioadenosine (phosphorylase route): step 1/1. In terms of biological role, catalyzes the reversible phosphorylation of S-methyl-5'-thioadenosine (MTA) to adenine and 5-methylthioribose-1-phosphate. Involved in the breakdown of MTA, a major by-product of polyamine biosynthesis. Responsible for the first step in the methionine salvage pathway after MTA has been generated from S-adenosylmethionine. Has broad substrate specificity with 6-aminopurine nucleosides as preferred substrates. The protein is S-methyl-5'-thioadenosine phosphorylase 1 of Puccinia graminis f. sp. tritici (strain CRL 75-36-700-3 / race SCCL) (Black stem rust fungus).